A 1528-amino-acid chain; its full sequence is Cell surface antigen I/II (1528 aa).

Positions 1–50 (MLQKCKLEGIIICNEKRLLGAAKVKSGRTLSGALLGTAILASGAGQKALA) are cleaved as a signal peptide. A disordered region spans residues 50–156 (AEETSTTSTS…PEIKDDYSKQ (107 aa)). The span at 51-68 (EETSTTSTSGGDTAVVGT) shows a compositional bias: low complexity. Composition is skewed to polar residues over residues 83–97 (NPSSQAETSQAQARQ) and 124–133 (TVSQDATVNK). The segment covering 142–154 (ANQKEPEIKDDYS) has biased composition (basic and acidic residues). Ag I/II A repeat units lie at residues 161 to 235 (QKAT…QQAN), 236 to 315 (SDSQ…QAGN), 316 to 396 (AANE…QSGN), and 397 to 478 (AANE…KKDL). Disordered regions lie at residues 840-951 (VPKV…VEPV) and 1459-1480 (SNTVRTSTPEPKQPSPVDPKTT). Residues 855–879 (TKPDEPTYEVEKELVDLPVEPKYEP) are compositionally biased toward basic and acidic residues. Over residues 1459–1468 (SNTVRTSTPE) the composition is skewed to polar residues. An LPXTG sorting signal motif is present at residues 1503–1507 (LPATG). Residue threonine 1506 is modified to Pentaglycyl murein peptidoglycan amidated threonine. Positions 1507–1528 (GDSSNAYLPLLGLVSLTAGFSC) are cleaved as a propeptide — removed by sortase.

Belongs to the antigen I/II family.

The protein resides in the secreted. It localises to the cell wall. The chain is Cell surface antigen I/II from Streptococcus downei (Streptococcus sobrinus).